The chain runs to 926 residues: Alpha-L-rhamnosidase (926 aa).

Residues 1-25 (MILHKSVFKSYIYVLTYFVFFSVMS) form the signal peptide. The N-palmitoyl cysteine moiety is linked to residue Cys26. Cys26 carries S-diacylglycerol cysteine lipidation. Alpha-L-rhamnose is bound by residues Asp504, 508 to 510 (RDE), Asp517, and Trp569. The Proton donor role is filled by Glu510. Glu779 functions as the Proton acceptor in the catalytic mechanism. An alpha-L-rhamnose-binding site is contributed by His800.

It belongs to the glycosyl hydrolase 78 family.

Its subcellular location is the cell membrane. It carries out the reaction Hydrolysis of terminal non-reducing alpha-L-rhamnose residues in alpha-L-rhamnosides.. In terms of biological role, alpha-L-rhamnosidase involved in ulvan degradation. Ulvan is the main polysaccharide component of the Ulvales (green seaweed) cell wall. It is composed of disaccharide building blocks comprising 3-sulfated rhamnose (Rha3S) linked to D-glucuronic acid (GlcA), L-iduronic acid (IduA), or D-xylose (Xyl). Alpha-L-rhamnosidase converts Rha-Xyl-Rha3S, the product of a sulfatase acting on Rha3S-Xyl-Rha3S oligosaccharides, to Rha and Xyl-Rha3S. The enzyme is able to degrade p-nitrophenyl-alpha-L-rhamnopyranoside (PNP-Rha) in vitro. This Formosa agariphila (strain DSM 15362 / KCTC 12365 / LMG 23005 / KMM 3901 / M-2Alg 35-1) protein is Alpha-L-rhamnosidase.